We begin with the raw amino-acid sequence, 335 residues long: Ketol-acid reductoisomerase (NADP(+)) 2 (335 aa).

The KARI N-terminal Rossmann domain occupies 1-180; sequence MKTYYEKDAN…GCTRAGVIET (180 aa). Residues 24–27, arginine 47, serine 51, and 81–84 contribute to the NADP(+) site; these read YGSQ and DEQQ. The active site involves histidine 106. NADP(+) is bound at residue glycine 132. One can recognise a KARI C-terminal knotted domain in the interval 181–326; it reads TFQEETETDL…AELREMMSWI (146 aa). Aspartate 189, glutamate 193, glutamate 225, and glutamate 229 together coordinate Mg(2+). Serine 250 is a substrate binding site.

This sequence belongs to the ketol-acid reductoisomerase family. Mg(2+) serves as cofactor.

The catalysed reaction is (2R)-2,3-dihydroxy-3-methylbutanoate + NADP(+) = (2S)-2-acetolactate + NADPH + H(+). It catalyses the reaction (2R,3R)-2,3-dihydroxy-3-methylpentanoate + NADP(+) = (S)-2-ethyl-2-hydroxy-3-oxobutanoate + NADPH + H(+). Its pathway is amino-acid biosynthesis; L-isoleucine biosynthesis; L-isoleucine from 2-oxobutanoate: step 2/4. It functions in the pathway amino-acid biosynthesis; L-valine biosynthesis; L-valine from pyruvate: step 2/4. Involved in the biosynthesis of branched-chain amino acids (BCAA). Catalyzes an alkyl-migration followed by a ketol-acid reduction of (S)-2-acetolactate (S2AL) to yield (R)-2,3-dihydroxy-isovalerate. In the isomerase reaction, S2AL is rearranged via a Mg-dependent methyl migration to produce 3-hydroxy-3-methyl-2-ketobutyrate (HMKB). In the reductase reaction, this 2-ketoacid undergoes a metal-dependent reduction by NADPH to yield (R)-2,3-dihydroxy-isovalerate. This chain is Ketol-acid reductoisomerase (NADP(+)) 2, found in Bacillus cereus (strain ATCC 10987 / NRS 248).